The following is a 30-amino-acid chain: Mejucin (30 aa).

It localises to the secreted. Functionally, bacteriocin that inhibits the growth of several Gram-positive bacteria, especially the food-borne pathogens L.monocytogenes, B.cereus strain ATCC 11778, B.cereus strain ATCC 21366, B.cereus strain ATCC 10876 and B.cereus strain ATCC 14579. Likely to act by disrupting the pathogen membrane resulting in leakage of intracellular constituents. Does not inhibit the growth of Gram-negative bacteria. This is Mejucin from Bacillus subtilis.